A 214-amino-acid chain; its full sequence is Probable nicotinate-nucleotide adenylyltransferase (214 aa).

Belongs to the NadD family.

It catalyses the reaction nicotinate beta-D-ribonucleotide + ATP + H(+) = deamido-NAD(+) + diphosphate. It participates in cofactor biosynthesis; NAD(+) biosynthesis; deamido-NAD(+) from nicotinate D-ribonucleotide: step 1/1. In terms of biological role, catalyzes the reversible adenylation of nicotinate mononucleotide (NaMN) to nicotinic acid adenine dinucleotide (NaAD). This chain is Probable nicotinate-nucleotide adenylyltransferase, found in Buchnera aphidicola subsp. Acyrthosiphon pisum (strain 5A).